A 147-amino-acid chain; its full sequence is Chorion class B protein B.L1 (147 aa).

Residues 1–38 (IGCGRGCGGRGYGGLGYGGLGYGGLGYGGLGGGCGRGF) are left arm. Tandem repeats lie at residues 11-15 (GYGGL), 16-20 (GYGGL), 21-25 (GYGGL), and 26-30 (GYGGL). Residues 11–30 (GYGGLGYGGLGYGGLGYGGL) form a 4 X 5 AA tandem repeats of G-Y-G-G-L region. Residues 39 to 107 (SGGGLPVATA…GNGAVGITRE (69 aa)) are central domain. Positions 108-147 (GGLGYGAGYGGGYGLGYGGYGGGYGLGYGGYGGCGCGCGY) are right arm (Gly-rich tandem repeats).

This sequence belongs to the chorion protein family.

This protein is one of many from the eggshell of the silk moth. In Bombyx mori (Silk moth), this protein is Chorion class B protein B.L1.